A 94-amino-acid chain; its full sequence is DNA-directed RNA polymerase subunit omega (94 aa).

This sequence belongs to the RNA polymerase subunit omega family. As to quaternary structure, the RNAP catalytic core consists of 2 alpha, 1 beta, 1 beta' and 1 omega subunit. When a sigma factor is associated with the core the holoenzyme is formed, which can initiate transcription.

It carries out the reaction RNA(n) + a ribonucleoside 5'-triphosphate = RNA(n+1) + diphosphate. Its function is as follows. Promotes RNA polymerase assembly. Latches the N- and C-terminal regions of the beta' subunit thereby facilitating its interaction with the beta and alpha subunits. The polypeptide is DNA-directed RNA polymerase subunit omega (Frankia alni (strain DSM 45986 / CECT 9034 / ACN14a)).